A 128-amino-acid polypeptide reads, in one-letter code: Fluoride-specific ion channel FluC (128 aa).

The next 4 membrane-spanning stretches (helical) occupy residues 5 to 25 (IVAI…LSLA), 35 to 55 (LGTL…AVVF), 67 to 87 (LFVI…SVEV), and 96 to 116 (FGWA…LTAL). Glycine 75 and threonine 78 together coordinate Na(+).

This sequence belongs to the fluoride channel Fluc/FEX (TC 1.A.43) family.

It localises to the cell inner membrane. The catalysed reaction is fluoride(in) = fluoride(out). Its activity is regulated as follows. Na(+) is not transported, but it plays an essential structural role and its presence is essential for fluoride channel function. Functionally, fluoride-specific ion channel. Important for reducing fluoride concentration in the cell, thus reducing its toxicity. This is Fluoride-specific ion channel FluC from Burkholderia orbicola (strain MC0-3).